The sequence spans 610 residues: Glutamine--fructose-6-phosphate aminotransferase [isomerizing] (610 aa).

The active-site Nucleophile; for GATase activity is the Cys-2. Residues 2-218 form the Glutamine amidotransferase type-2 domain; the sequence is CGIVGAVAQR…EGDVAEITRH (217 aa). 2 SIS domains span residues 286-426 and 459-600; these read AADI…LKGR and LSED…VDQP. Lys-605 serves as the catalytic For Fru-6P isomerization activity.

In terms of assembly, homodimer.

It localises to the cytoplasm. The enzyme catalyses D-fructose 6-phosphate + L-glutamine = D-glucosamine 6-phosphate + L-glutamate. Catalyzes the first step in hexosamine metabolism, converting fructose-6P into glucosamine-6P using glutamine as a nitrogen source. The chain is Glutamine--fructose-6-phosphate aminotransferase [isomerizing] from Haemophilus ducreyi (strain 35000HP / ATCC 700724).